Consider the following 201-residue polypeptide: tRNA (guanine-N(7)-)-methyltransferase (201 aa).

S-adenosyl-L-methionine is bound by residues Glu34, Glu59, Asp86, and Asp107. Asp107 is a catalytic residue. Residues Lys111, Asp143, and Thr181–Glu184 contribute to the substrate site.

The protein belongs to the class I-like SAM-binding methyltransferase superfamily. TrmB family.

It carries out the reaction guanosine(46) in tRNA + S-adenosyl-L-methionine = N(7)-methylguanosine(46) in tRNA + S-adenosyl-L-homocysteine. Its pathway is tRNA modification; N(7)-methylguanine-tRNA biosynthesis. In terms of biological role, catalyzes the formation of N(7)-methylguanine at position 46 (m7G46) in tRNA. The chain is tRNA (guanine-N(7)-)-methyltransferase from Mycoplasma mobile (strain ATCC 43663 / 163K / NCTC 11711) (Mesomycoplasma mobile).